Reading from the N-terminus, the 329-residue chain is GTP 3',8-cyclase 1 (329 aa).

Positions 7–230 constitute a Radical SAM core domain; sequence GQGRQIDYLR…LDSAEQSGGP (224 aa). Residue Arg-16 participates in GTP binding. [4Fe-4S] cluster is bound by residues Cys-23 and Cys-27. An S-adenosyl-L-methionine-binding site is contributed by Tyr-29. Residue Cys-30 coordinates [4Fe-4S] cluster. Position 65 (Arg-65) interacts with GTP. Gly-69 contributes to the S-adenosyl-L-methionine binding site. Residue Thr-96 coordinates GTP. Ser-120 is an S-adenosyl-L-methionine binding site. Residue Lys-157 coordinates GTP. Met-191 serves as a coordination point for S-adenosyl-L-methionine. Residues Cys-255 and Cys-258 each coordinate [4Fe-4S] cluster. 260-262 is a GTP binding site; the sequence is RLR. [4Fe-4S] cluster is bound at residue Cys-272.

It belongs to the radical SAM superfamily. MoaA family. As to quaternary structure, monomer and homodimer. [4Fe-4S] cluster serves as cofactor.

The enzyme catalyses GTP + AH2 + S-adenosyl-L-methionine = (8S)-3',8-cyclo-7,8-dihydroguanosine 5'-triphosphate + 5'-deoxyadenosine + L-methionine + A + H(+). It participates in cofactor biosynthesis; molybdopterin biosynthesis. Catalyzes the cyclization of GTP to (8S)-3',8-cyclo-7,8-dihydroguanosine 5'-triphosphate. The polypeptide is GTP 3',8-cyclase 1 (moaA1) (Pseudomonas aeruginosa (strain ATCC 15692 / DSM 22644 / CIP 104116 / JCM 14847 / LMG 12228 / 1C / PRS 101 / PAO1)).